Reading from the N-terminus, the 261-residue chain is Cytochrome c oxidase subunit 3 (261 aa).

Residues 1 to 15 (MTHQTHAYHMVNPSP) lie on the Mitochondrial matrix side of the membrane. Residues 16 to 34 (WPLTGALSALLLTSGLMMW) form a helical membrane-spanning segment. Residues 35-40 (FHFNNP) lie on the Mitochondrial intermembrane side of the membrane. Residues 41-66 (TLLVLGLLTNLISSYQWWRDIVREGT) form a helical membrane-spanning segment. Residues 67 to 72 (YQGHHT) are Mitochondrial matrix-facing. The chain crosses the membrane as a helical span at residues 73–105 (KVVQKGLRYGMVLFIISEVFFFLGFFWAFYHSS). The Mitochondrial intermembrane portion of the chain corresponds to 106–128 (LAPTPELGGCWPPTGISPLNPLE). A helical transmembrane segment spans residues 129–152 (VPLLNTSILLASGVSITWSHHSLM). The Mitochondrial matrix segment spans residues 153-155 (EGN). The helical transmembrane segment at 156–183 (RKQMIQALMITIALGLYFTALQAMEYYE) threads the bilayer. At 184–190 (SSFTISD) the chain is on the mitochondrial intermembrane side. The chain crosses the membrane as a helical span at residues 191–223 (GVYGSTFFVATGFHGLHVIIGTTFLITCLLRQL). Over 224–232 (LYHFTSNHH) the chain is Mitochondrial matrix. A helical membrane pass occupies residues 233-256 (FGFEAAAWYWHFVDVVWLFLYVSI). The Mitochondrial intermembrane segment spans residues 257–261 (YWWGS).

The protein belongs to the cytochrome c oxidase subunit 3 family. In terms of assembly, component of the cytochrome c oxidase (complex IV, CIV), a multisubunit enzyme composed of 14 subunits. The complex is composed of a catalytic core of 3 subunits MT-CO1, MT-CO2 and MT-CO3, encoded in the mitochondrial DNA, and 11 supernumerary subunits COX4I, COX5A, COX5B, COX6A, COX6B, COX6C, COX7A, COX7B, COX7C, COX8 and NDUFA4, which are encoded in the nuclear genome. The complex exists as a monomer or a dimer and forms supercomplexes (SCs) in the inner mitochondrial membrane with NADH-ubiquinone oxidoreductase (complex I, CI) and ubiquinol-cytochrome c oxidoreductase (cytochrome b-c1 complex, complex III, CIII), resulting in different assemblies (supercomplex SCI(1)III(2)IV(1) and megacomplex MCI(2)III(2)IV(2)).

The protein resides in the mitochondrion inner membrane. The catalysed reaction is 4 Fe(II)-[cytochrome c] + O2 + 8 H(+)(in) = 4 Fe(III)-[cytochrome c] + 2 H2O + 4 H(+)(out). Functionally, component of the cytochrome c oxidase, the last enzyme in the mitochondrial electron transport chain which drives oxidative phosphorylation. The respiratory chain contains 3 multisubunit complexes succinate dehydrogenase (complex II, CII), ubiquinol-cytochrome c oxidoreductase (cytochrome b-c1 complex, complex III, CIII) and cytochrome c oxidase (complex IV, CIV), that cooperate to transfer electrons derived from NADH and succinate to molecular oxygen, creating an electrochemical gradient over the inner membrane that drives transmembrane transport and the ATP synthase. Cytochrome c oxidase is the component of the respiratory chain that catalyzes the reduction of oxygen to water. Electrons originating from reduced cytochrome c in the intermembrane space (IMS) are transferred via the dinuclear copper A center (CU(A)) of subunit 2 and heme A of subunit 1 to the active site in subunit 1, a binuclear center (BNC) formed by heme A3 and copper B (CU(B)). The BNC reduces molecular oxygen to 2 water molecules using 4 electrons from cytochrome c in the IMS and 4 protons from the mitochondrial matrix. This chain is Cytochrome c oxidase subunit 3 (MT-CO3), found in Tachyglossus aculeatus aculeatus (Southeast Australian short-beaked echidna).